The primary structure comprises 98 residues: C-X-C motif chemokine 10 (98 aa).

An N-terminal signal peptide occupies residues 1 to 21; that stretch reads MNPSAAVVLCLVLLSLSGTQG. Arg-26 carries the post-translational modification Citrulline. 2 disulfides stabilise this stretch: Cys-30–Cys-57 and Cys-32–Cys-74.

It belongs to the intercrine alpha (chemokine CxC) family. Monomer, dimer, and tetramer. Interacts with CXCR3 (via N-terminus). In terms of tissue distribution, in the central nervous system, CXCL10 is predominantly localized to activated neurons. Expressed in both microglia and astrocytes.

It is found in the secreted. Its function is as follows. Pro-inflammatory cytokine that is involved in a wide variety of processes such as chemotaxis, differentiation, and activation of peripheral immune cells, regulation of cell growth, apoptosis and modulation of angiostatic effects. Plays thereby an important role during viral infections by stimulating the activation and migration of immune cells to the infected sites. Mechanistically, binding of CXCL10 to the CXCR3 receptor activates G protein-mediated signaling and results in downstream activation of phospholipase C-dependent pathway, an increase in intracellular calcium production and actin reorganization. In turn, recruitment of activated Th1 lymphocytes occurs at sites of inflammation. Activation of the CXCL10/CXCR3 axis also plays an important role in neurons in response to brain injury for activating microglia, the resident macrophage population of the central nervous system, and directing them to the lesion site. This recruitment is an essential element for neuronal reorganization. This is C-X-C motif chemokine 10 (Cxcl10) from Rattus norvegicus (Rat).